The sequence spans 1776 residues: Signal-induced proliferation-associated 1-like protein 3 (1776 aa).

Disordered regions lie at residues 41–157 (AQNG…GRAF) and 240–325 (PGAL…EASR). Residues 54 to 69 (PAATTTRPSPTTPAMP) are compositionally biased toward low complexity. 2 stretches are compositionally biased toward polar residues: residues 89–99 (EQSNPSPSQDT) and 112–129 (RNLQ…SSGS). Serine 94 carries the post-translational modification Phosphoserine. Residues 131 to 140 (AFHRLSRRRS) are compositionally biased toward basic residues. Residue serine 140 is modified to Phosphoserine. The segment covering 257–268 (GQPTKDSLQSLQ) has biased composition (polar residues). A Phosphoserine modification is found at serine 394. Positions 438-461 (SRASVGSPGGSSEAHMAEPTLSTH) are disordered. In terms of domain architecture, Rap-GAP spans 605–822 (LLKLDEQGLC…RTRQEYLKDL (218 aa)). A PDZ domain is found at 960–1024 (DMTLRRNGLG…DQMIDLLRTS (65 aa)). Disordered regions lie at residues 1040–1104 (PRRG…AQSL), 1117–1164 (RESQ…ATYA), and 1184–1632 (DPHF…LDPG). Polar residues-rich tracts occupy residues 1074-1104 (APWQ…AQSL) and 1151-1160 (PSGSFSTPGS). The segment covering 1190-1201 (DGMSSGDSSSGG) has biased composition (low complexity). Positions 1239–1255 (SRQDAAGKDSPNRHSKG) are enriched in basic and acidic residues. Over residues 1260-1275 (SSHSSSNTLSSNASSS) the composition is skewed to low complexity. Over residues 1298-1316 (GGSSDSGIDTTLYTSSPSC) the composition is skewed to polar residues. The span at 1344–1357 (SAGRPHPVDRRREV) shows a compositional bias: basic and acidic residues. Serine 1358 is subject to Phosphoserine. The residue at position 1381 (threonine 1381) is a Phosphothreonine. Positions 1409–1436 (VYKTASAETPRPSQLSQCSPFQLSTSVP) are enriched in polar residues. At lysine 1442 the chain carries N6-acetyllysine. A compositionally biased stretch (basic and acidic residues) spans 1503 to 1512 (TIEDDLKKLI). Polar residues-rich tracts occupy residues 1526-1541 (GQSP…SDES) and 1566-1578 (LFTS…SSTL). 2 positions are modified to phosphoserine: serine 1538 and serine 1541. The segment covering 1589–1601 (PPSGAPSTTPATG) has biased composition (low complexity). Phosphoserine is present on residues serine 1614 and serine 1617. The span at 1620-1630 (DGRDRPLRRLD) shows a compositional bias: basic and acidic residues. Serine 1672 carries the post-translational modification Phosphoserine. Residues 1678–1705 (AHSPVHSHLSLERGPQTPRATPTMSEES) are disordered. Residues threonine 1694 and threonine 1698 each carry the phosphothreonine modification. Positions 1715–1769 (QLEVMLKQLHTDLQKEKQDKVVLQSEVASLRQNNQRLQEESQAASEQLRKFAELF) form a coiled coil.

It is found in the apical cell membrane. Its function is as follows. Plays a critical role in epithelial cell morphogenesis, polarity, adhesion and cytoskeletal organization in the lens. The chain is Signal-induced proliferation-associated 1-like protein 3 (Sipa1l3) from Mus musculus (Mouse).